The chain runs to 230 residues: Putative 14-3-3-like protein GF14-H (230 aa).

This sequence belongs to the 14-3-3 family.

In terms of biological role, is associated with a DNA binding complex that binds to the G box, a well-characterized cis-acting DNA regulatory element found in plant genes. The polypeptide is Putative 14-3-3-like protein GF14-H (GF14H) (Oryza sativa subsp. japonica (Rice)).